The chain runs to 27 residues: Protein YkiD (27 aa).

This is Protein YkiD from Escherichia coli (strain K12).